The chain runs to 311 residues: Dof zinc finger protein DOF1.4 (311 aa).

Residues 1–12 (MQSKNMIVASSH) are compositionally biased toward polar residues. Residues 1–29 (MQSKNMIVASSHQQQQQQQPQQPQPQLKC) form a disordered region. A compositionally biased stretch (low complexity) spans 13–26 (QQQQQQQPQQPQPQ). A Dof-type zinc finger spans residues 27-81 (LKCPRCDSSNTKFCYYNNYSLSQPRHFCKACKRYWTRGGTLRNVPVGGSYRKNKR). 4 residues coordinate Zn(2+): Cys29, Cys32, Cys54, and Cys57. A disordered region spans residues 72–110 (VGGSYRKNKRVKRPSTATTTTASTVSTTNSSSPNNPHQI). Positions 85–107 (PSTATTTTASTVSTTNSSSPNNP) are enriched in low complexity.

Its subcellular location is the nucleus. Transcription factor that binds specifically to a 5'-AA[AG]G-3' consensus core sequence. The polypeptide is Dof zinc finger protein DOF1.4 (DOF1.4) (Arabidopsis thaliana (Mouse-ear cress)).